A 188-amino-acid polypeptide reads, in one-letter code: Probable nicotinate-nucleotide adenylyltransferase (188 aa).

This sequence belongs to the NadD family.

The catalysed reaction is nicotinate beta-D-ribonucleotide + ATP + H(+) = deamido-NAD(+) + diphosphate. It participates in cofactor biosynthesis; NAD(+) biosynthesis; deamido-NAD(+) from nicotinate D-ribonucleotide: step 1/1. Catalyzes the reversible adenylation of nicotinate mononucleotide (NaMN) to nicotinic acid adenine dinucleotide (NaAD). This Salinispora tropica (strain ATCC BAA-916 / DSM 44818 / JCM 13857 / NBRC 105044 / CNB-440) protein is Probable nicotinate-nucleotide adenylyltransferase.